The following is a 732-amino-acid chain: Elongation factor 2 (732 aa).

In terms of domain architecture, tr-type G spans 19–260; it reads ERIRNIDIAA…MVIKNLPNPR (242 aa). GTP is bound by residues 28 to 35, 94 to 98, and 148 to 151; these read AHIDHGKT, DTPGH, and NKVD. Histidine 598 carries the post-translational modification Diphthamide.

It belongs to the TRAFAC class translation factor GTPase superfamily. Classic translation factor GTPase family. EF-G/EF-2 subfamily.

It localises to the cytoplasm. Functionally, catalyzes the GTP-dependent ribosomal translocation step during translation elongation. During this step, the ribosome changes from the pre-translocational (PRE) to the post-translocational (POST) state as the newly formed A-site-bound peptidyl-tRNA and P-site-bound deacylated tRNA move to the P and E sites, respectively. Catalyzes the coordinated movement of the two tRNA molecules, the mRNA and conformational changes in the ribosome. This chain is Elongation factor 2, found in Picrophilus torridus (strain ATCC 700027 / DSM 9790 / JCM 10055 / NBRC 100828 / KAW 2/3).